Reading from the N-terminus, the 394-residue chain is Acetyl-CoA acetyltransferase (394 aa).

The Acyl-thioester intermediate role is filled by cysteine 89. Active-site proton acceptor residues include histidine 350 and cysteine 380.

The protein belongs to the thiolase-like superfamily. Thiolase family. Homotetramer.

It localises to the cytoplasm. The catalysed reaction is 2 acetyl-CoA = acetoacetyl-CoA + CoA. Its pathway is biopolymer metabolism; poly-(R)-3-hydroxybutanoate biosynthesis. The protein operates within metabolic intermediate biosynthesis; (R)-mevalonate biosynthesis; (R)-mevalonate from acetyl-CoA: step 1/3. This chain is Acetyl-CoA acetyltransferase, found in Allochromatium vinosum (strain ATCC 17899 / DSM 180 / NBRC 103801 / NCIMB 10441 / D) (Chromatium vinosum).